The chain runs to 37 residues: Cytochrome b6-f complex subunit 5 (37 aa).

A helical transmembrane segment spans residues 5–25 (ILLGIVLGMVLVTLAGLFVAA).

The protein belongs to the PetG family. In terms of assembly, the 4 large subunits of the cytochrome b6-f complex are cytochrome b6, subunit IV (17 kDa polypeptide, PetD), cytochrome f and the Rieske protein, while the 4 small subunits are PetG, PetL, PetM and PetN. The complex functions as a dimer.

It is found in the cellular thylakoid membrane. Functionally, component of the cytochrome b6-f complex, which mediates electron transfer between photosystem II (PSII) and photosystem I (PSI), cyclic electron flow around PSI, and state transitions. PetG is required for either the stability or assembly of the cytochrome b6-f complex. The chain is Cytochrome b6-f complex subunit 5 from Synechococcus sp. (strain JA-3-3Ab) (Cyanobacteria bacterium Yellowstone A-Prime).